The primary structure comprises 200 residues: uncharacterized protein (200 aa).

The first 19 residues, 1–19 (MNAMFHSLFALSFVSLVAS), serve as a signal peptide directing secretion. The helical transmembrane segment at 148–168 (FMVIVSLAAFCISVLAGLALQ) threads the bilayer.

It is found in the membrane. This is an uncharacterized protein from Caenorhabditis elegans.